Consider the following 539-residue polypeptide: Chaperonin GroEL (539 aa).

Residues threonine 29–proline 32, aspartate 86–threonine 90, glycine 413, asparagine 476–alanine 478, and aspartate 492 contribute to the ATP site.

It belongs to the chaperonin (HSP60) family. Forms a cylinder of 14 subunits composed of two heptameric rings stacked back-to-back. Interacts with the co-chaperonin GroES.

Its subcellular location is the cytoplasm. The catalysed reaction is ATP + H2O + a folded polypeptide = ADP + phosphate + an unfolded polypeptide.. In terms of biological role, together with its co-chaperonin GroES, plays an essential role in assisting protein folding. The GroEL-GroES system forms a nano-cage that allows encapsulation of the non-native substrate proteins and provides a physical environment optimized to promote and accelerate protein folding. This Pediococcus pentosaceus (strain ATCC 25745 / CCUG 21536 / LMG 10740 / 183-1w) protein is Chaperonin GroEL.